We begin with the raw amino-acid sequence, 245 residues long: PF03932 family protein CutC (245 aa).

Belongs to the CutC family.

The protein resides in the cytoplasm. The chain is PF03932 family protein CutC from Caulobacter vibrioides (strain ATCC 19089 / CIP 103742 / CB 15) (Caulobacter crescentus).